The primary structure comprises 287 residues: MEMO1 family protein MJ0403 (287 aa).

This sequence belongs to the MEMO1 family.

The sequence is that of MEMO1 family protein MJ0403 from Methanocaldococcus jannaschii (strain ATCC 43067 / DSM 2661 / JAL-1 / JCM 10045 / NBRC 100440) (Methanococcus jannaschii).